The following is an 828-amino-acid chain: Phenylalanine--tRNA ligase beta subunit (828 aa).

One can recognise a tRNA-binding domain in the interval leucine 43–leucine 161. The interval lysine 203–asparagine 230 is disordered. The region spanning arginine 436 to proline 519 is the B5 domain. Mg(2+) contacts are provided by aspartate 497, aspartate 503, and aspartate 507. In terms of domain architecture, FDX-ACB spans proline 736–arginine 828.

Belongs to the phenylalanyl-tRNA synthetase beta subunit family. Type 1 subfamily. Tetramer of two alpha and two beta subunits. The cofactor is Mg(2+).

Its subcellular location is the cytoplasm. It carries out the reaction tRNA(Phe) + L-phenylalanine + ATP = L-phenylalanyl-tRNA(Phe) + AMP + diphosphate + H(+). In Aster yellows witches'-broom phytoplasma (strain AYWB), this protein is Phenylalanine--tRNA ligase beta subunit.